We begin with the raw amino-acid sequence, 117 residues long: Large ribosomal subunit protein bL20 (117 aa).

The protein belongs to the bacterial ribosomal protein bL20 family.

In terms of biological role, binds directly to 23S ribosomal RNA and is necessary for the in vitro assembly process of the 50S ribosomal subunit. It is not involved in the protein synthesizing functions of that subunit. In Campylobacter lari (strain RM2100 / D67 / ATCC BAA-1060), this protein is Large ribosomal subunit protein bL20.